Reading from the N-terminus, the 295-residue chain is MTIKAPTLNVPGLGVDPLTQRIKEKEKKWKYKIAVLSGKGGVGKSTVAVNLTAALAKMGYFVGILDADIHGPNVAKMFGIGNTDIYAEKFEDGHFEMIPPTVDFMGQVTPIKVMSMGMMVPEDQPIIWRGSLVTKAIKQLLGDVMWGELDFMIIDFPPGTGDEILTVVQSIQLDAAIVVTTPQEVALLDTGKAVNMMKKMEVPYIAVIENMSYLICPHCGNKIDIFGEGGGEKLAEKEGVDFLGKVPIDLKAREASDLGIPIVLYGDTPAAKAFMEIAEKLVNKLKEIKGDGREK.

G38–S45 is a binding site for ATP.

Belongs to the Mrp/NBP35 ATP-binding proteins family. Homodimer.

Its function is as follows. Binds and transfers iron-sulfur (Fe-S) clusters to target apoproteins. Can hydrolyze ATP. In Pyrococcus furiosus (strain ATCC 43587 / DSM 3638 / JCM 8422 / Vc1), this protein is Iron-sulfur cluster carrier protein.